A 554-amino-acid polypeptide reads, in one-letter code: Hydroxylamine reductase (554 aa).

Cys-3, Cys-6, Cys-18, and Cys-25 together coordinate [2Fe-2S] cluster. Positions 252, 276, 320, 408, 436, 461, 495, and 497 each coordinate hybrid [4Fe-2O-2S] cluster. Position 408 is a cysteine persulfide (Cys-408).

It belongs to the HCP family. Requires [2Fe-2S] cluster as cofactor. It depends on hybrid [4Fe-2O-2S] cluster as a cofactor.

The protein localises to the cytoplasm. The enzyme catalyses A + NH4(+) + H2O = hydroxylamine + AH2 + H(+). Its function is as follows. Catalyzes the reduction of hydroxylamine to form NH(3) and H(2)O. This Shewanella loihica (strain ATCC BAA-1088 / PV-4) protein is Hydroxylamine reductase.